The chain runs to 37 residues: Large ribosomal subunit protein bL36c (37 aa).

This sequence belongs to the bacterial ribosomal protein bL36 family.

It localises to the plastid. The protein localises to the chloroplast. This Ostreococcus tauri protein is Large ribosomal subunit protein bL36c.